An 88-amino-acid chain; its full sequence is Small ribosomal subunit protein bS20 (88 aa).

A disordered region spans residues 1–28; it reads MANIKSQIKRNKTNEKARLRNKAVKSSL.

It belongs to the bacterial ribosomal protein bS20 family.

In terms of biological role, binds directly to 16S ribosomal RNA. The chain is Small ribosomal subunit protein bS20 from Streptomyces avermitilis (strain ATCC 31267 / DSM 46492 / JCM 5070 / NBRC 14893 / NCIMB 12804 / NRRL 8165 / MA-4680).